The chain runs to 247 residues: MRSGVIAQKVGMTRVFTEAGEHIPVTVLKLSNCQVLGHRTSEKNGYVALQLGSGARKTVYMPKAERGQFAVAKVAPKRKVAEFRVSEDSLIPVGAEIQADHFVVGQFVDVTGTSVGKGYAGGMKRWNFGGLRATHGVSISHRSIGSTGGRQDPGKTFKNKKMPGHMGVDRITTLNLRVVQTDVERGLILVEGAVPGSKGGWIAVRDAVKKPLPKEAPKPGKFKVVGDAQAVDEDKAPADTPAEKEGA.

Disordered stretches follow at residues 140–164 and 212–247; these read SHRSIGSTGGRQDPGKTFKNKKMPG and LPKEAPKPGKFKVVGDAQAVDEDKAPADTPAEKEGA. Gln151 carries the N5-methylglutamine modification. A compositionally biased stretch (basic and acidic residues) spans 232 to 247; that stretch reads DEDKAPADTPAEKEGA.

This sequence belongs to the universal ribosomal protein uL3 family. In terms of assembly, part of the 50S ribosomal subunit. Forms a cluster with proteins L14 and L19. In terms of processing, methylated by PrmB.

In terms of biological role, one of the primary rRNA binding proteins, it binds directly near the 3'-end of the 23S rRNA, where it nucleates assembly of the 50S subunit. In Nitrobacter winogradskyi (strain ATCC 25391 / DSM 10237 / CIP 104748 / NCIMB 11846 / Nb-255), this protein is Large ribosomal subunit protein uL3.